Consider the following 488-residue polypeptide: Glutamyl-tRNA(Gln) amidotransferase subunit A (488 aa).

Active-site charge relay system residues include K77 and S152. S176 functions as the Acyl-ester intermediate in the catalytic mechanism.

It belongs to the amidase family. GatA subfamily. As to quaternary structure, heterotrimer of A, B and C subunits.

It carries out the reaction L-glutamyl-tRNA(Gln) + L-glutamine + ATP + H2O = L-glutaminyl-tRNA(Gln) + L-glutamate + ADP + phosphate + H(+). Allows the formation of correctly charged Gln-tRNA(Gln) through the transamidation of misacylated Glu-tRNA(Gln) in organisms which lack glutaminyl-tRNA synthetase. The reaction takes place in the presence of glutamine and ATP through an activated gamma-phospho-Glu-tRNA(Gln). The sequence is that of Glutamyl-tRNA(Gln) amidotransferase subunit A from Streptococcus pneumoniae (strain 70585).